We begin with the raw amino-acid sequence, 328 residues long: D-cysteine desulfhydrase (328 aa).

At Lys-51 the chain carries N6-(pyridoxal phosphate)lysine.

The protein belongs to the ACC deaminase/D-cysteine desulfhydrase family. Homodimer. Pyridoxal 5'-phosphate serves as cofactor.

The catalysed reaction is D-cysteine + H2O = hydrogen sulfide + pyruvate + NH4(+) + H(+). Functionally, catalyzes the alpha,beta-elimination reaction of D-cysteine and of several D-cysteine derivatives. It could be a defense mechanism against D-cysteine. This chain is D-cysteine desulfhydrase, found in Escherichia coli O9:H4 (strain HS).